Here is a 273-residue protein sequence, read N- to C-terminus: MTLDLQTTIEQAWENRANLSPVDASAEVRDAVEHTIDGLDLGRLRVAEKIDDQWIVHQWIKKAVLLSFRLHDNAVMGQGPLQFYDKVPTKFAGYGEAAFKAGGYRVVPPAVARRGAFIARNVVLMPSYVNIGAYVDEGTMVDTWATVGSCAQIGKNVHLSGGVGIGGVLEPLQANPTIIEDNCFIGARSEVVEGVVVEENSVLAMGVFLSQSTKIYDRATGKVSYGRVPSGSVVVPGSLPSEDGSHSLACAVIVKRVDAQTRAKTSINDLLRA.

Positions 105 and 142 each coordinate substrate.

This sequence belongs to the transferase hexapeptide repeat family. As to quaternary structure, homotrimer.

It is found in the cytoplasm. It carries out the reaction (S)-2,3,4,5-tetrahydrodipicolinate + succinyl-CoA + H2O = (S)-2-succinylamino-6-oxoheptanedioate + CoA. The protein operates within amino-acid biosynthesis; L-lysine biosynthesis via DAP pathway; LL-2,6-diaminopimelate from (S)-tetrahydrodipicolinate (succinylase route): step 1/3. In Bordetella bronchiseptica (strain ATCC BAA-588 / NCTC 13252 / RB50) (Alcaligenes bronchisepticus), this protein is 2,3,4,5-tetrahydropyridine-2,6-dicarboxylate N-succinyltransferase.